The primary structure comprises 334 residues: Thioredoxin reductase aclT (334 aa).

Residues 16–19 (GGPA), 38–43 (NASIDR), isoleucine 93, alanine 122, aspartate 294, and 302–303 (TL) contribute to the FAD site.

The protein belongs to the class-II pyridine nucleotide-disulfide oxidoreductase family. Homodimer. It depends on FAD as a cofactor.

The protein operates within mycotoxin biosynthesis. Functionally, thioredoxin reductase; part of the gene cluster that mediates the biosynthesis of aspirochlorine (or antibiotic A30641), an unusual halogenated spiro compound with distinctive antifungal properties due to selective inhibition of protein biosynthesis, and which is also active against bacteria, viruses, and murine tumor cells. The non-ribosomal peptide synthetase (NRPS) aclP is responsible the formation of the diketopiperazine (DKP) core from the condensation of 2 phenylalanine residues. One Phe residue is tailored into chlorotyrosine by hydroxylation and chlorination, whereas the second Phe undergoes an unprecedented C-C bond cleavage to be converted into glycine. After formation of the DKP, sulfur is incorporated into the DKP by conjugation with glutathione by aclG, followed by its stepwise degradation to the thiol by aclI, aclJ and aclK, and the dithiol oxidation by aclT. In addition, oxygenases (aclB, aclC, aclL and aclO) and O-methyltransferases (aclM and aclU) act as tailoring enzymes to produce the intermediate dechloroaspirochlorine. Ultimately, chlorination of dechloroaspirochlorine by the halogenase aclH is the last step in the aspirochlorine pathway. This is Thioredoxin reductase aclT from Aspergillus oryzae (strain ATCC 42149 / RIB 40) (Yellow koji mold).